The chain runs to 347 residues: (RS)-norcoclaurine 6-O-methyltransferase (347 aa).

Residues glycine 192, aspartate 215, aspartate 235, methionine 236, and lysine 249 each contribute to the S-adenosyl-L-methionine site. Histidine 253 serves as the catalytic Proton acceptor.

The protein belongs to the class I-like SAM-binding methyltransferase superfamily. Cation-independent O-methyltransferase family. COMT subfamily. In terms of assembly, homodimer.

It catalyses the reaction norcoclaurine + S-adenosyl-L-methionine = coclaurine + S-adenosyl-L-homocysteine + H(+). Its pathway is alkaloid biosynthesis; (S)-reticuline biosynthesis; (S)-reticuline from (S)-norcoclaurine: step 1/4. Its function is as follows. Catalyzes the transfer of the S-methyl group of S-adenosyl-L-methionine (AdoMet) to the 6-hydroxyl group of norcoclaurine to form coclaurine. The sequence is that of (RS)-norcoclaurine 6-O-methyltransferase from Coptis japonica (Japanese goldthread).